A 967-amino-acid chain; its full sequence is Phosphoenolpyruvate carboxylase 1 (967 aa).

S11 carries the phosphoserine modification. Catalysis depends on residues H173 and K602. S704 is subject to Phosphoserine.

Belongs to the PEPCase type 1 family. Homotetramer. Requires Mg(2+) as cofactor. Mn(2+) serves as cofactor. The phosphorylation of Ser-11 is reversibly promoted by inorganic phosphate (Pi) deprivation. Enhanced activity by phosphorylation at pH 7.3 by lowering Km and sensitivity to inhibition by L-malate and L-aspartate, while enhancing activation by glucose 6-phosphate. Expressed in all plant organs, with higher levels in roots.

Its subcellular location is the cytoplasm. It catalyses the reaction oxaloacetate + phosphate = phosphoenolpyruvate + hydrogencarbonate. By light-reversible phosphorylation. Activated by inorganic phosphate (Pi) deprivation and glucose 6-phosphate. Inhibited by L-malate and L-aspartate. Its function is as follows. Through the carboxylation of phosphoenolpyruvate (PEP) it forms oxaloacetate, a four-carbon dicarboxylic acid source for the tricarboxylic acid cycle. Contributes probably to the adaptation to inorganic phosphate (Pi) deprivation. The sequence is that of Phosphoenolpyruvate carboxylase 1 (PPC1) from Arabidopsis thaliana (Mouse-ear cress).